We begin with the raw amino-acid sequence, 96 residues long: C-C motif chemokine 1 (96 aa).

The first 23 residues, 1 to 23, serve as a signal peptide directing secretion; that stretch reads MQIITTALVCLLLAGMWPEDVDS. Intrachain disulfides connect C33/C57, C34/C73, and C49/C91. N-linked (GlcNAc...) asparagine glycosylation occurs at N52.

This sequence belongs to the intercrine beta (chemokine CC) family. As to quaternary structure, monomer.

Its subcellular location is the secreted. In terms of biological role, cytokine that is chemotactic for monocytes but not for neutrophils. Binds to CCR8. The polypeptide is C-C motif chemokine 1 (CCL1) (Homo sapiens (Human)).